A 179-amino-acid polypeptide reads, in one-letter code: Bifunctional protein PyrR (179 aa).

The PRPP-binding motif lies at 100 to 112 (VILIDDVLFTGRT).

The protein belongs to the purine/pyrimidine phosphoribosyltransferase family. PyrR subfamily.

The catalysed reaction is UMP + diphosphate = 5-phospho-alpha-D-ribose 1-diphosphate + uracil. Regulates the transcription of the pyrimidine nucleotide (pyr) operon in response to exogenous pyrimidines. Functionally, also displays a weak uracil phosphoribosyltransferase activity which is not physiologically significant. The sequence is that of Bifunctional protein PyrR from Mannheimia succiniciproducens (strain KCTC 0769BP / MBEL55E).